Consider the following 394-residue polypeptide: Stabilizer of axonemal microtubules 2 (394 aa).

6 mn regions span residues 110–122, 144–158, 244–256, 278–292, 312–324, and 346–360; these read STTF…PQEI, DTSH…QLEV, NSTS…PYQA, KSTT…EICR, LSTF…PHEL, and VTMY…KQEI.

Belongs to the FAM154 family.

This is Stabilizer of axonemal microtubules 2 (Saxo2) from Mus musculus (Mouse).